The following is a 288-amino-acid chain: Lipoyl synthase (288 aa).

Residues C39, C44, C50, C65, C69, C72, and S276 each coordinate [4Fe-4S] cluster. Residues 51 to 265 enclose the Radical SAM core domain; the sequence is WGKGTATFMI…KETGLKKGFE (215 aa).

The protein belongs to the radical SAM superfamily. Lipoyl synthase family. [4Fe-4S] cluster serves as cofactor.

The protein localises to the cytoplasm. It catalyses the reaction [[Fe-S] cluster scaffold protein carrying a second [4Fe-4S](2+) cluster] + N(6)-octanoyl-L-lysyl-[protein] + 2 oxidized [2Fe-2S]-[ferredoxin] + 2 S-adenosyl-L-methionine + 4 H(+) = [[Fe-S] cluster scaffold protein] + N(6)-[(R)-dihydrolipoyl]-L-lysyl-[protein] + 4 Fe(3+) + 2 hydrogen sulfide + 2 5'-deoxyadenosine + 2 L-methionine + 2 reduced [2Fe-2S]-[ferredoxin]. It participates in protein modification; protein lipoylation via endogenous pathway; protein N(6)-(lipoyl)lysine from octanoyl-[acyl-carrier-protein]: step 2/2. Functionally, catalyzes the radical-mediated insertion of two sulfur atoms into the C-6 and C-8 positions of the octanoyl moiety bound to the lipoyl domains of lipoate-dependent enzymes, thereby converting the octanoylated domains into lipoylated derivatives. This chain is Lipoyl synthase, found in Bacteroides fragilis (strain ATCC 25285 / DSM 2151 / CCUG 4856 / JCM 11019 / LMG 10263 / NCTC 9343 / Onslow / VPI 2553 / EN-2).